A 735-amino-acid polypeptide reads, in one-letter code: Trafficking protein particle complex subunit 12 (735 aa).

2 disordered regions span residues 1 to 204 and 237 to 276; these read MEDA…QPSP and NPGA…PPAS. A compositionally biased stretch (pro residues) spans 13–22; that stretch reads PEAPHPPQLA. Residues 34–50 show a composition bias toward acidic residues; sequence ETIDLGGDEFGSEENET. Residues Ser-109 and Ser-184 each carry the phosphoserine modification. TPR repeat units follow at residues 545–578, 580–613, 620–653, and 654–687; these read GRVM…YPEQ, PQLL…TQKL, IMVL…DPRN, and AVAN…DPRH.

As to quaternary structure, component of the multisubunit TRAPP (transport protein particle) complex, which includes at least TRAPPC2, TRAPPC2L, TRAPPC3, TRAPPC3L, TRAPPC4, TRAPPC5, TRAPPC8, TRAPPC9, TRAPPC10, TRAPPC11 and TRAPPC12. Interacts with CENPE. Phosphorylated as the cells enter mitosis but is dephosphorylated at or before the onset of anaphase. The phosphorylated form recruits CENPE to kinetochores more efficiently than the non-phosphorylated form.

It localises to the endoplasmic reticulum-Golgi intermediate compartment. The protein localises to the nucleus. In terms of biological role, component of the TRAPP complex, which is involved in endoplasmic reticulum to Golgi apparatus trafficking at a very early stage. Also plays a role in chromosome congression, kinetochore assembly and stability and controls the recruitment of CENPE to the kinetochores. This is Trafficking protein particle complex subunit 12 from Homo sapiens (Human).